The chain runs to 2539 residues: Zinc finger FYVE domain-containing protein 26 (2539 aa).

A phosphoserine mark is found at S297, S615, S619, and S703. 3 disordered regions span residues 594-637 (HLPE…SLGV), 699-724 (ISSRSPPEKPKQESQSCSGSRDGLQS), and 738-806 (WRHK…SLSA). The span at 764–774 (PSLRRGRRTRR) shows a compositional bias: basic residues. Positions 787–805 (SLESTSSELSTSTSEGSLS) are enriched in low complexity. Position 800 is a phosphoserine (S800). The stretch at 868-895 (MFMERYQEVIQELAQVEHKIENQNSDAG) forms a coiled coil. Residues 1267 to 1296 (DLPLSTPSSPRTTENPTLERKPYSSPRDSS) form a disordered region. Positions 1271-1282 (STPSSPRTTENP) are enriched in polar residues. S1742, S1764, S1780, and S1782 each carry phosphoserine. Residues 1754–1808 (ADPETLPRSPSAEFSPAAPPGISSIHSPSLRERSFPPTQPSQEFVPPATPPARHQ) are disordered. Over residues 1760-1769 (PRSPSAEFSP) the composition is skewed to low complexity. The FYVE-type zinc-finger motif lies at 1812-1872 (DETESICMVC…VCDQCYSYCN (61 aa)). The Zn(2+) site is built by C1818, C1821, C1835, C1838, C1843, C1846, C1864, and C1867.

In terms of assembly, interacts with AP5Z1, AP5B1, AP5S1 and SPG11. Interacts with TTC19 and KIF13A. In terms of tissue distribution, strongest expression in the adrenal gland, bone marrow, adult brain, fetal brain, lung, placenta, prostate, skeletal muscle, testis, thymus, and retina. Intermediate levels are detected in other structures, including the spinal cord.

It localises to the cytoplasm. The protein localises to the cytoskeleton. The protein resides in the microtubule organizing center. It is found in the centrosome. Its subcellular location is the midbody. Phosphatidylinositol 3-phosphate-binding protein required for the abscission step in cytokinesis: recruited to the midbody during cytokinesis and acts as a regulator of abscission. May also be required for efficient homologous recombination DNA double-strand break repair. The polypeptide is Zinc finger FYVE domain-containing protein 26 (ZFYVE26) (Homo sapiens (Human)).